The primary structure comprises 208 residues: Uracil phosphoribosyltransferase (208 aa).

Residues arginine 78, arginine 103, and 130 to 138 (DPMLATANS) each bind 5-phospho-alpha-D-ribose 1-diphosphate. Uracil-binding positions include isoleucine 193 and 198–200 (GDA). Residue aspartate 199 participates in 5-phospho-alpha-D-ribose 1-diphosphate binding.

This sequence belongs to the UPRTase family. The cofactor is Mg(2+).

The enzyme catalyses UMP + diphosphate = 5-phospho-alpha-D-ribose 1-diphosphate + uracil. It participates in pyrimidine metabolism; UMP biosynthesis via salvage pathway; UMP from uracil: step 1/1. Its activity is regulated as follows. Allosterically activated by GTP. Catalyzes the conversion of uracil and 5-phospho-alpha-D-ribose 1-diphosphate (PRPP) to UMP and diphosphate. This is Uracil phosphoribosyltransferase from Brucella ovis (strain ATCC 25840 / 63/290 / NCTC 10512).